A 590-amino-acid polypeptide reads, in one-letter code: Aspartate--tRNA(Asp/Asn) ligase (590 aa).

An L-aspartate-binding site is contributed by Glu170. Positions 194 to 197 (QLFK) are aspartate. An L-aspartate-binding site is contributed by Arg216. ATP-binding positions include 216 to 218 (RDE) and Gln225. Residue His448 coordinates L-aspartate. Glu482 contributes to the ATP binding site. L-aspartate is bound at residue Arg489. 534-537 (GWDR) is an ATP binding site. The interval 559–590 (GGVDPLTEAPAPITAQQRKESGIDAKPGKDGA) is disordered. Residues 575–590 (QRKESGIDAKPGKDGA) show a composition bias toward basic and acidic residues.

This sequence belongs to the class-II aminoacyl-tRNA synthetase family. Type 1 subfamily. As to quaternary structure, homodimer.

It is found in the cytoplasm. It catalyses the reaction tRNA(Asx) + L-aspartate + ATP = L-aspartyl-tRNA(Asx) + AMP + diphosphate. Functionally, aspartyl-tRNA synthetase with relaxed tRNA specificity since it is able to aspartylate not only its cognate tRNA(Asp) but also tRNA(Asn). Reaction proceeds in two steps: L-aspartate is first activated by ATP to form Asp-AMP and then transferred to the acceptor end of tRNA(Asp/Asn). The polypeptide is Aspartate--tRNA(Asp/Asn) ligase (Mycolicibacterium gilvum (strain PYR-GCK) (Mycobacterium gilvum (strain PYR-GCK))).